We begin with the raw amino-acid sequence, 139 residues long: Transcription antitermination protein NusB (139 aa).

It belongs to the NusB family.

Functionally, involved in transcription antitermination. Required for transcription of ribosomal RNA (rRNA) genes. Binds specifically to the boxA antiterminator sequence of the ribosomal RNA (rrn) operons. This is Transcription antitermination protein NusB from Natranaerobius thermophilus (strain ATCC BAA-1301 / DSM 18059 / JW/NM-WN-LF).